We begin with the raw amino-acid sequence, 442 residues long: Inhibitor of Apoptosis OPG037 (442 aa).

ANK repeat units follow at residues 67 to 96 (DGNY…DPNA), 100 to 131 (HNKT…KINN), 203 to 233 (DGNT…DVNK), 237 to 267 (FGDS…VITD), 292 to 321 (YDST…ICED), and 323 to 347 (MYYA…SVDS).

It belongs to the orthopoxvirus OPG037 family. In terms of assembly, may interact with host caspase-9-Apaf-1 complex.

Its subcellular location is the host cytoplasm. Functionally, inhibits host apoptosis. Acts by associating with host apoptosome. In Monkeypox virus, this protein is Inhibitor of Apoptosis OPG037 (OPG037).